The sequence spans 310 residues: Choline trimethylamine-lyase activating enzyme (310 aa).

The Radical SAM core domain maps to 17-304; the sequence is YDGPGVRTLV…EACIRKYDFP (288 aa). [4Fe-4S] cluster is bound by residues C31, C35, C38, C57, C60, C63, and C99. 37–39 is a binding site for S-adenosyl-L-methionine; the sequence is WCS. 2 consecutive 4Fe-4S ferredoxin-type domains span residues 48–77 and 79–109; these read YQVLYKENLCVHCGACVPVCPAGVHTISAS and LRHGFAEGAQCIGCRRCEDVCPSSALAVVGE. S-adenosyl-L-methionine contacts are provided by residues G139, 188 to 190, and H264; that span reads DVK.

Belongs to the organic radical-activating enzymes family. As to quaternary structure, monomer. It depends on [4Fe-4S] cluster as a cofactor.

The enzyme catalyses glycyl-[protein] + reduced [flavodoxin] + S-adenosyl-L-methionine = glycin-2-yl radical-[protein] + semiquinone [flavodoxin] + 5'-deoxyadenosine + L-methionine + H(+). It functions in the pathway amine and polyamine metabolism; choline degradation. In terms of biological role, catalyzes activation of the choline trimethylamine-lyase CutC under anaerobic conditions by generation of an organic free radical on a glycine residue, via a homolytic cleavage of S-adenosyl-L-methionine (SAM). Is involved in the anaerobic choline utilization pathway that allows D.alaskensis to grow on choline as a source of carbon and energy. In Oleidesulfovibrio alaskensis (strain ATCC BAA-1058 / DSM 17464 / G20) (Desulfovibrio alaskensis), this protein is Choline trimethylamine-lyase activating enzyme.